Consider the following 344-residue polypeptide: MEPHKVVPLSKPHPPVVGKVTHHSIELYWDLEQKEKRQGPQEQWLRFSIEEEDPKMHSYGVIYTGYATRHVVEGLEPRTLYKFRLKVTSPSGEYEYSPVVSVATTREPISSEHFHRAVSVNDEDLLLRILEGGHVMIDVPNKFGFTALMVAAQKGYTRLVKILVSNGTDVNLKNGSGKDSLMLACYAGHLDVVKYLRRHGASWEARDLGGCTALHWAADGGHCSVIDWMIKDGCEVDVVDTGSGWTPLMRVSAVTGSQKVASLLIEAGADVNIKDKDGKTPLMVAVLNNHEQLVQLLLDKGADATVKNEFGKGVLEMARVFDRQNVLSLLEEKKKKMPRKSSVH.

A Fibronectin type-III domain is found at 11-108; sequence KPHPPVVGKV…VVSVATTREP (98 aa). ANK repeat units follow at residues 109–139, 143–172, 176–205, 209–238, 243–273, and 277–306; these read ISSE…MIDV, FGFT…DVNL, SGKD…SWEA, GGCT…EVDV, SGWT…DVNI, and DGKT…DATV.

As to quaternary structure, interacts with COPS5; regulates the phosphorylation of JUN and the transcriptional activity of AP-1. Interacts with RYBP; may prevent the ubiquitin-mediated proteasomal degradation of FANK1. Post-translationally, polyubiquitinated. Polyubiquitination leads to proteasomal degradation. Mostly restricted to testis (at protein level), including mid to late pachytene spermatocytes (stages VI-X), diplotene spermatocytes (stage XI), meiotically dividing spermatocytes (stage XII) and spermatids in steps 1-14. Highest levels in late pachytene spermatocytes and spermatids in steps 1-9.

The protein localises to the nucleus. It localises to the cytoplasm. Its subcellular location is the cytosol. The protein resides in the cytoskeleton. It is found in the cilium basal body. The protein localises to the cell projection. It localises to the cilium. Through the activation of JUN and AP-1-mediated transcription, may regulate apoptosis. The chain is Fibronectin type 3 and ankyrin repeat domains 1 protein from Mus musculus (Mouse).